The chain runs to 422 residues: Tyrosine--tRNA ligase (422 aa).

Tyrosine 34 is a binding site for L-tyrosine. A 'HIGH' region motif is present at residues proline 39–histidine 48. L-tyrosine contacts are provided by tyrosine 172 and glutamine 176. The 'KMSKS' region signature appears at lysine 232–threonine 236. Lysine 235 lines the ATP pocket. Positions lysine 354–lysine 412 constitute an S4 RNA-binding domain.

The protein belongs to the class-I aminoacyl-tRNA synthetase family. TyrS type 1 subfamily. Homodimer.

The protein resides in the cytoplasm. It carries out the reaction tRNA(Tyr) + L-tyrosine + ATP = L-tyrosyl-tRNA(Tyr) + AMP + diphosphate + H(+). Catalyzes the attachment of tyrosine to tRNA(Tyr) in a two-step reaction: tyrosine is first activated by ATP to form Tyr-AMP and then transferred to the acceptor end of tRNA(Tyr). The protein is Tyrosine--tRNA ligase of Buchnera aphidicola subsp. Schizaphis graminum (strain Sg).